We begin with the raw amino-acid sequence, 488 residues long: MCLKMRYERIKYILLFSLMHLVYSNSTFESFTENPHISSQISNVLYMDQMFIIYILICILLILISVIVYLSKRYSQQMMQSSDNITNRRSNPEVRNKSNIYDLPPLLDVTSVNEETPIVKRPINERIENLEFDPRFEIDQAKLEISEDKLGSGFFGEVCYGLLSMRTSNTETDTLQKLSVAVKQSNDPTQENQEKMIEDETKLMCAIGRNPNILAIIGAVTANSGSARNLLIVEFVECGDLLKFLEEKKSIFKDELVYEKNGYLLPKSIRRKTYMFNENEDDVIEESLDSLCTSDLLSFSYQIAEGMEYLASIPCVHRDLALRNVLLNKNKTIRIADFGLARKYQVDGYYRITKGVGTPMPARWMAPEVMREGKCTEKSDVWSYGVSLYEMFSLGELPYSNVSNSDVFEHVVQGNQLPMPQYCHPKMYDRMKQFWNFDATFRPSFSKCVEFFEEHLSVSATNLLEQIQKTLKSEAERQSKLEDWIRRD.

Residues 1-26 (MCLKMRYERIKYILLFSLMHLVYSNS) form the signal peptide. N-linked (GlcNAc...) asparagine glycosylation occurs at asparagine 25. The Extracellular portion of the chain corresponds to 27–50 (TFESFTENPHISSQISNVLYMDQM). A helical transmembrane segment spans residues 51–70 (FIIYILICILLILISVIVYL). Residues 71–488 (SKRYSQQMMQ…SKLEDWIRRD (418 aa)) lie on the Cytoplasmic side of the membrane. The Protein kinase domain maps to 144–458 (EISEDKLGSG…VEFFEEHLSV (315 aa)). ATP-binding positions include 150 to 158 (LGSGFFGEV) and lysine 183. Aspartate 319 functions as the Proton acceptor in the catalytic mechanism.

Belongs to the protein kinase superfamily. Tyr protein kinase family. As to expression, hypodermal cells.

The protein localises to the cell membrane. It carries out the reaction L-tyrosyl-[protein] + ATP = O-phospho-L-tyrosyl-[protein] + ADP + H(+). May be specifically involved in cell-cell interactions regulating cell fusions that generate the hypodermis during postembryonic development. It has a role in the development of the HYP7 hypodermal syncytium. The protein is Receptor-like tyrosine-protein kinase kin-15 (kin-15) of Caenorhabditis elegans.